Reading from the N-terminus, the 173-residue chain is Avenin-like a5 (173 aa).

A signal peptide spans 1-19; it reads MKTMLILALIALAATSVVA.

The protein belongs to the prolamin family. Contains 7 disulfide bonds.

Functionally, seed storage protein. Not integrated in the gluten polymer through disulfide bonds, unless incorporated by reduction and reoxidation during dough making. Increases dough strength and bread volume, but decreases dough stability when added into a base wheat flour. The polypeptide is Avenin-like a5 (Triticum aestivum (Wheat)).